Consider the following 434-residue polypeptide: Trigger factor (434 aa).

In terms of domain architecture, PPIase FKBP-type spans 161-246 (KDIVTIDFKG…IHKVEEPQLP (86 aa)).

This sequence belongs to the FKBP-type PPIase family. Tig subfamily.

The protein localises to the cytoplasm. It carries out the reaction [protein]-peptidylproline (omega=180) = [protein]-peptidylproline (omega=0). Involved in protein export. Acts as a chaperone by maintaining the newly synthesized protein in an open conformation. Functions as a peptidyl-prolyl cis-trans isomerase. The protein is Trigger factor of Marinobacter nauticus (strain ATCC 700491 / DSM 11845 / VT8) (Marinobacter aquaeolei).